The primary structure comprises 476 residues: Ribulose bisphosphate carboxylase large chain (476 aa).

Residues 1-2 (MS) constitute a propeptide that is removed on maturation. Proline 3 bears the N-acetylproline mark. Position 14 is an N6,N6,N6-trimethyllysine (lysine 14). Substrate-binding residues include asparagine 123 and threonine 173. Lysine 175 (proton acceptor) is an active-site residue. Residue lysine 177 participates in substrate binding. Mg(2+)-binding residues include lysine 201, aspartate 203, and glutamate 204. Position 201 is an N6-carboxylysine (lysine 201). Residue histidine 294 is the Proton acceptor of the active site. Substrate is bound by residues arginine 295, histidine 327, and serine 379.

It belongs to the RuBisCO large chain family. Type I subfamily. Heterohexadecamer of 8 large chains and 8 small chains; disulfide-linked. The disulfide link is formed within the large subunit homodimers. Mg(2+) serves as cofactor. Post-translationally, the disulfide bond which can form in the large chain dimeric partners within the hexadecamer appears to be associated with oxidative stress and protein turnover.

Its subcellular location is the plastid. The protein localises to the chloroplast. It carries out the reaction 2 (2R)-3-phosphoglycerate + 2 H(+) = D-ribulose 1,5-bisphosphate + CO2 + H2O. The catalysed reaction is D-ribulose 1,5-bisphosphate + O2 = 2-phosphoglycolate + (2R)-3-phosphoglycerate + 2 H(+). In terms of biological role, ruBisCO catalyzes two reactions: the carboxylation of D-ribulose 1,5-bisphosphate, the primary event in carbon dioxide fixation, as well as the oxidative fragmentation of the pentose substrate in the photorespiration process. Both reactions occur simultaneously and in competition at the same active site. The protein is Ribulose bisphosphate carboxylase large chain of Phaseolus vulgaris (Kidney bean).